Consider the following 195-residue polypeptide: Small ribosomal subunit protein uS7 (195 aa).

This sequence belongs to the universal ribosomal protein uS7 family. Part of the 30S ribosomal subunit.

Functionally, one of the primary rRNA binding proteins, it binds directly to 16S rRNA where it nucleates assembly of the head domain of the 30S subunit. Is located at the subunit interface close to the decoding center. The chain is Small ribosomal subunit protein uS7 from Sulfolobus acidocaldarius (strain ATCC 33909 / DSM 639 / JCM 8929 / NBRC 15157 / NCIMB 11770).